Consider the following 168-residue polypeptide: MVIKIPNTFIKATSLLSLILYFLIIATSKSNSVLADEVVDQEDDPEYYILDETPSILSNVTISSKTRLLVSHYKKIKKGMRCHVESYNICNGVKANKGTSLLHCCKKHCRNVLGDRNNCGRCGHKCGFGQRCCGGVCTYVNFNPNHCGKCTRKCASGVKCEYGYCGYA.

The signal sequence occupies residues 1–30 (MVIKIPNTFIKATSLLSLILYFLIIATSKS). Asparagine 59 carries N-linked (GlcNAc...) asparagine glycosylation.

It belongs to the STIG1 family. As to quaternary structure, interacts with PRK5 and to a lower extent with PRK4. As to expression, highly expressed in flowers, and at very low levels in leaves.

The protein localises to the secreted. It localises to the extracellular space. The protein resides in the apoplast. Involved in the regulation of cell death induced by extracellular reactive oxygen species. Only the processed peptide, and not the full length GRI can bind in vivo to the extracellular domain of the receptor PRK5. The GRIp-induced cell death is superoxide and salicylic acid dependent. This chain is Protein GRIM REAPER, found in Arabidopsis thaliana (Mouse-ear cress).